Reading from the N-terminus, the 141-residue chain is Hemoglobin subunit alpha-A (141 aa).

Residues 1 to 141 (VLSANDKTNV…VGNVLSAKYR (141 aa)) enclose the Globin domain. An O2-binding site is contributed by His-58. His-87 serves as a coordination point for heme b.

Belongs to the globin family. Heterotetramer of two alpha chains and two beta chains. In terms of tissue distribution, red blood cells.

Its function is as follows. Involved in oxygen transport from the lung to the various peripheral tissues. In Trigonoceps occipitalis (White-headed vulture), this protein is Hemoglobin subunit alpha-A (HBAA).